The primary structure comprises 418 residues: Gamma-glutamyl phosphate reductase (418 aa).

The protein belongs to the gamma-glutamyl phosphate reductase family.

Its subcellular location is the cytoplasm. The catalysed reaction is L-glutamate 5-semialdehyde + phosphate + NADP(+) = L-glutamyl 5-phosphate + NADPH + H(+). It functions in the pathway amino-acid biosynthesis; L-proline biosynthesis; L-glutamate 5-semialdehyde from L-glutamate: step 2/2. In terms of biological role, catalyzes the NADPH-dependent reduction of L-glutamate 5-phosphate into L-glutamate 5-semialdehyde and phosphate. The product spontaneously undergoes cyclization to form 1-pyrroline-5-carboxylate. The sequence is that of Gamma-glutamyl phosphate reductase from Clostridium acetobutylicum (strain ATCC 824 / DSM 792 / JCM 1419 / IAM 19013 / LMG 5710 / NBRC 13948 / NRRL B-527 / VKM B-1787 / 2291 / W).